We begin with the raw amino-acid sequence, 767 residues long: Photosystem I P700 chlorophyll a apoprotein A1 (767 aa).

Residues 1 to 22 (MTISPPESGEKNKKVLEDPVKA) form a disordered region. Basic and acidic residues predominate over residues 8 to 22 (SGEKNKKVLEDPVKA). Transmembrane regions (helical) follow at residues 76–99 (IFSA…FHGA), 162–185 (LMAL…FHYH), 201–225 (LNHH…HIGA), 309–327 (VSHH…GHMY), 368–391 (RHAQ…HHMY), 407–433 (LGLF…IAMV), 455–477 (ALIS…LYIH), and 558–576 (LMIH…LILL). Cys600 and Cys609 together coordinate [4Fe-4S] cluster. A run of 2 helical transmembrane segments spans residues 616-637 (HVFL…HFSW) and 681-703 (ISMY…MFLF). His692 lines the divinylchlorophyll a' pocket. 2 residues coordinate divinyl chlorophyll a: Met700 and Tyr708. Trp709 is a binding site for phylloquinone. The chain crosses the membrane as a helical span at residues 741–761 (AVGVTHFLVGGIATTWAFFHA).

This sequence belongs to the PsaA/PsaB family. As to quaternary structure, the PsaA/B heterodimer binds the P700 divinyl chlorophyll special pair and subsequent electron acceptors. PSI consists of a core antenna complex that captures photons, and an electron transfer chain that converts photonic excitation into a charge separation. The cyanobacterial PSI reaction center is composed of one copy each of PsaA,B,C,D,E,F,I,J,K,L,M and X, and forms trimeric complexes. Requires PSI electron transfer chain: 5 divinyl chlorophyll a, 1 divinyl chlorophyll a', 2 phylloquinones and 3 4Fe-4S clusters. PSI core antenna: 90 divinyl chlorophyll a, 22 carotenoids, 3 phospholipids and 1 galactolipid. P700 is a divinyl chlorophyll a/divinyl chlorophyll a' dimer, A0 is one or more divinyl chlorophyll a, A1 is one or both phylloquinones and FX is a shared 4Fe-4S iron-sulfur center. as cofactor.

Its subcellular location is the cellular thylakoid membrane. It carries out the reaction reduced [plastocyanin] + hnu + oxidized [2Fe-2S]-[ferredoxin] = oxidized [plastocyanin] + reduced [2Fe-2S]-[ferredoxin]. PsaA and PsaB bind P700, the primary electron donor of photosystem I (PSI), as well as the electron acceptors A0, A1 and FX. PSI is a plastocyanin/cytochrome c6-ferredoxin oxidoreductase, converting photonic excitation into a charge separation, which transfers an electron from the donor P700 chlorophyll pair to the spectroscopically characterized acceptors A0, A1, FX, FA and FB in turn. Oxidized P700 is reduced on the lumenal side of the thylakoid membrane by plastocyanin or cytochrome c6. The chain is Photosystem I P700 chlorophyll a apoprotein A1 from Prochlorococcus marinus (strain AS9601).